Here is a 130-residue protein sequence, read N- to C-terminus: Ribosome-binding factor A (130 aa).

A disordered region spans residues 111–130 (RDLDDVGPGATSSDEDAEQR).

Belongs to the RbfA family. As to quaternary structure, monomer. Binds 30S ribosomal subunits, but not 50S ribosomal subunits or 70S ribosomes.

Its subcellular location is the cytoplasm. One of several proteins that assist in the late maturation steps of the functional core of the 30S ribosomal subunit. Associates with free 30S ribosomal subunits (but not with 30S subunits that are part of 70S ribosomes or polysomes). Required for efficient processing of 16S rRNA. May interact with the 5'-terminal helix region of 16S rRNA. The chain is Ribosome-binding factor A from Xanthomonas oryzae pv. oryzae (strain MAFF 311018).